Here is a 130-residue protein sequence, read N- to C-terminus: Glycine cleavage system H protein (130 aa).

The 83-residue stretch at 28–110 (TVRIGITSVA…FGEGWLFEVE (83 aa)) folds into the Lipoyl-binding domain. N6-lipoyllysine is present on lysine 69.

Belongs to the GcvH family. The glycine cleavage system is composed of four proteins: P, T, L and H. (R)-lipoate is required as a cofactor.

Its function is as follows. The glycine cleavage system catalyzes the degradation of glycine. The H protein shuttles the methylamine group of glycine from the P protein to the T protein. The protein is Glycine cleavage system H protein of Corynebacterium aurimucosum (strain ATCC 700975 / DSM 44827 / CIP 107346 / CN-1) (Corynebacterium nigricans).